Reading from the N-terminus, the 202-residue chain is uncharacterized protein (202 aa).

One can recognise a GST N-terminal domain in the interval 1–78; it reads MKLVGSYTSP…YIELMNVAPA (78 aa). Glutathione contacts are provided by residues Ser9, Val49, and 62-63; that span reads DS. In terms of domain architecture, GST C-terminal spans 83 to 202; that stretch reads DPLESLRVRK…SFARTEPPKA (120 aa).

The protein belongs to the GST superfamily. HSP26 family.

Its function is as follows. Glutathione (GSH) transferase homolog, that might be involved in selenium metabolism. This is an uncharacterized protein from Escherichia coli (strain K12).